The sequence spans 161 residues: Cyclic pyranopterin monophosphate synthase (161 aa).

Substrate contacts are provided by residues 75-77 and 113-114; these read LCH and ME. Aspartate 128 is an active-site residue.

Belongs to the MoaC family. As to quaternary structure, homohexamer; trimer of dimers.

It carries out the reaction (8S)-3',8-cyclo-7,8-dihydroguanosine 5'-triphosphate = cyclic pyranopterin phosphate + diphosphate. It functions in the pathway cofactor biosynthesis; molybdopterin biosynthesis. Functionally, catalyzes the conversion of (8S)-3',8-cyclo-7,8-dihydroguanosine 5'-triphosphate to cyclic pyranopterin monophosphate (cPMP). This is Cyclic pyranopterin monophosphate synthase from Salmonella dublin (strain CT_02021853).